Reading from the N-terminus, the 556-residue chain is PTS system fructose-specific EIIB'BC component (556 aa).

PTS EIIB type-2 domains are found at residues 1-85 (MKLF…LANG) and 106-201 (IVAV…KAFK). Residue Cys112 is the Phosphocysteine intermediate; for EIIB activity of the active site. At Cys112 the chain carries Phosphocysteine; by EIIA. The PTS EIIC type-2 domain maps to 224–556 (VYKHLMTGVS…AIIKSKNNAE (333 aa)). A run of 10 helical transmembrane segments spans residues 237–257 (PLVV…FNVI), 275–295 (SGVA…FSIA), 302–322 (VGLI…GGII), 324–344 (GFLA…PASL), 349–369 (PILI…IYLI), 390–410 (VNAI…MGGP), 431–451 (MAAA…ATWI), 468–488 (FVLG…ADPI), 490–510 (VIIS…GLNI), and 529–549 (LKYL…YAII).

Its subcellular location is the cell inner membrane. The enzyme catalyses D-fructose(out) + N(pros)-phospho-L-histidyl-[protein] = D-fructose 1-phosphate(in) + L-histidyl-[protein]. Functionally, the phosphoenolpyruvate-dependent sugar phosphotransferase system (sugar PTS), a major carbohydrate active transport system, catalyzes the phosphorylation of incoming sugar substrates concomitantly with their translocation across the cell membrane. The enzyme II FruAB PTS system is involved in fructose transport. In Haemophilus influenzae (strain ATCC 51907 / DSM 11121 / KW20 / Rd), this protein is PTS system fructose-specific EIIB'BC component.